We begin with the raw amino-acid sequence, 543 residues long: Formin-binding protein 1-like (543 aa).

One can recognise an F-BAR domain in the interval 1 to 263 (MSWGTELWDQ…AAKSVDERRD (263 aa)). Coiled coils occupy residues 66–258 (FTSC…AKSV) and 334–426 (LEDF…QRSE). Residues 339-416 (HLPPEQRRKR…IHKNEGWLSE (78 aa)) form the REM-1 domain. The segment at 424 to 467 (RSERRHSAEANHLVAQGRESPEGSYTEDANQEGRVQPQHHAHPE) is disordered. The SH3 domain maps to 479–540 (PAIGHCKSLY…PTSYIEITLE (62 aa)).

It belongs to the FNBP1 family. As to quaternary structure, homodimerizes, the dimers can polymerize end-to-end to form filamentous structures. Interacts with GTP-bound cdc42 and wasl/n-wasp.

The protein localises to the cytoplasm. It is found in the cytoskeleton. The protein resides in the cell cortex. Its subcellular location is the cytoplasmic vesicle. It localises to the cell membrane. Functionally, required to coordinate membrane tubulation with reorganization of the actin cytoskeleton during endocytosis. Essential for autophagy of intracellular bacterial pathogens. Promotes cdc42-induced actin polymerization by activating the wasl-waspip complex, the predominant form of wasl/n-wasp in cells. The polypeptide is Formin-binding protein 1-like (fnbp1l) (Xenopus laevis (African clawed frog)).